The primary structure comprises 243 residues: MMIKQSPFLLLTTILFTVAVFVAALDPAPEDPIFELYMHDLLGGSSPTARPITGLLGNIYNGQVPFAKQIGFTPPENGIAIPNANGALPTVNGINGVPLGTGLSGTAYSGQNLNGIQTQLGPDGLSLGFGTITVIDDILTSGPDLGSQPLGKAQGVYVASSADGSTQMMAFTAMLEGGEYNDNLNFYGIYRIGSAMSHLSVTGGTGRFKNACGFAEVRPLIPSGQHEVDGAESLLRIIVHLKY.

Positions 1-24 (MMIKQSPFLLLTTILFTVAVFVAA) are cleaved as a signal peptide.

The protein belongs to the plant dirigent protein family. In terms of assembly, homodimer.

It localises to the secreted. Its subcellular location is the extracellular space. It is found in the apoplast. Functionally, dirigent proteins impart stereoselectivity on the phenoxy radical-coupling reaction, yielding optically active lignans from two molecules of coniferyl alcohol in the biosynthesis of lignans, flavonolignans, and alkaloids and thus plays a central role in plant secondary metabolism. This is Dirigent protein 16 (DIR16) from Arabidopsis thaliana (Mouse-ear cress).